Reading from the N-terminus, the 267-residue chain is Dihydropteroate synthase (267 aa).

The Pterin-binding domain occupies 1–251 (MTKTKIMGIL…NVELNAKLAK (251 aa)). Mg(2+) is bound at residue Asn11. (7,8-dihydropterin-6-yl)methyl diphosphate contacts are provided by residues Thr51, Asp84, Asn103, Asp167, Lys203, and 239–241 (RVH).

Belongs to the DHPS family. In terms of assembly, homodimer. It depends on Mg(2+) as a cofactor.

The catalysed reaction is (7,8-dihydropterin-6-yl)methyl diphosphate + 4-aminobenzoate = 7,8-dihydropteroate + diphosphate. Its pathway is cofactor biosynthesis; tetrahydrofolate biosynthesis; 7,8-dihydrofolate from 2-amino-4-hydroxy-6-hydroxymethyl-7,8-dihydropteridine diphosphate and 4-aminobenzoate: step 1/2. Functionally, catalyzes the condensation of para-aminobenzoate (pABA) with 6-hydroxymethyl-7,8-dihydropterin diphosphate (DHPt-PP) to form 7,8-dihydropteroate (H2Pte), the immediate precursor of folate derivatives. This Staphylococcus aureus (strain Mu50 / ATCC 700699) protein is Dihydropteroate synthase (folP).